The sequence spans 175 residues: Sec-independent protein translocase protein TatB (175 aa).

Residues 1–21 (MLDLGLSKMALIGVVALVVLG) traverse the membrane as a helical segment. Over residues 94-115 (SAVSPGGSAAADAPDGPSAASG) the composition is skewed to low complexity. 2 disordered regions span residues 94-118 (SAVS…GEPS) and 153-175 (VQSG…ARFL). Residues 160 to 175 (VARHRPASLRRPARFL) are compositionally biased toward basic residues.

Belongs to the TatB family. As to quaternary structure, the Tat system comprises two distinct complexes: a TatABC complex, containing multiple copies of TatA, TatB and TatC subunits, and a separate TatA complex, containing only TatA subunits. Substrates initially bind to the TatABC complex, which probably triggers association of the separate TatA complex to form the active translocon.

Its subcellular location is the cell inner membrane. Functionally, part of the twin-arginine translocation (Tat) system that transports large folded proteins containing a characteristic twin-arginine motif in their signal peptide across membranes. Together with TatC, TatB is part of a receptor directly interacting with Tat signal peptides. TatB may form an oligomeric binding site that transiently accommodates folded Tat precursor proteins before their translocation. The sequence is that of Sec-independent protein translocase protein TatB from Burkholderia pseudomallei (strain 1106a).